The sequence spans 210 residues: Tissue inhibitor of metalloproteinase (210 aa).

Positions 1-27 (MDLRKHLGLLTLLLVAVFAFYGRPADA) are cleaved as a signal peptide. Position 28 (C28) interacts with Zn(2+). Involved in metalloproteinase-binding regions lie at residues 28 to 31 (CSCM) and 93 to 94 (DA). Cystine bridges form between C28-C96, C30-C118, C145-C195, C150-C155, and C165-C180. An NTR domain is found at 28-145 (CSCMPSHPQT…SGGYAKATNC (118 aa)).

This sequence belongs to the protease inhibitor I35 (TIMP) family. In terms of tissue distribution, expressed in heads of female and male adult flies. Expressed at the time of eclosion in unopened wings of adult flies. Strongly expressed at the tip of ovarian germarium region 1 where germline stem cells (GSCs) and cystoblasts reside and in region 2 of the germarium.

Its subcellular location is the secreted. Its function is as follows. Metalloproteinase inhibitor that acts on both matrix metalloproteinases Mmp1 and Mmp2 in vitro. Complexes with metalloproteinases and irreversibly inactivates them by binding to their catalytic zinc cofactor. Required for wing maturation which is the final step in morphogenesis of the adult fly. Involved in the negative regulation of developmental tissue invasion for imaginal disk eversion during metamorphosis by inhibiting Mmp-mediated basement membrane (BM) degradation. Required for oogenesis and for the long-term maintainance of germarial structure and shape in the adult ovaries. Required for maintaining composition and biophysical properties of the extracellular matrix (ECM), and for the normal organization and cyst production of the germline stem cell (GSC) niche. This chain is Tissue inhibitor of metalloproteinase, found in Drosophila melanogaster (Fruit fly).